The sequence spans 274 residues: Bis(5'-nucleosyl)-tetraphosphatase, symmetrical (274 aa).

Belongs to the Ap4A hydrolase family.

It carries out the reaction P(1),P(4)-bis(5'-adenosyl) tetraphosphate + H2O = 2 ADP + 2 H(+). Functionally, hydrolyzes diadenosine 5',5'''-P1,P4-tetraphosphate to yield ADP. This is Bis(5'-nucleosyl)-tetraphosphatase, symmetrical from Shewanella sediminis (strain HAW-EB3).